A 552-amino-acid polypeptide reads, in one-letter code: Dihydroxy-acid dehydratase (552 aa).

D78 provides a ligand contact to Mg(2+). C119 lines the [2Fe-2S] cluster pocket. The Mg(2+) site is built by D120 and K121. An N6-carboxylysine modification is found at K121. C191 provides a ligand contact to [2Fe-2S] cluster. Residue E442 coordinates Mg(2+). S468 (proton acceptor) is an active-site residue.

Belongs to the IlvD/Edd family. Homodimer. [2Fe-2S] cluster is required as a cofactor. Mg(2+) serves as cofactor.

The catalysed reaction is (2R)-2,3-dihydroxy-3-methylbutanoate = 3-methyl-2-oxobutanoate + H2O. The enzyme catalyses (2R,3R)-2,3-dihydroxy-3-methylpentanoate = (S)-3-methyl-2-oxopentanoate + H2O. Its pathway is amino-acid biosynthesis; L-isoleucine biosynthesis; L-isoleucine from 2-oxobutanoate: step 3/4. The protein operates within amino-acid biosynthesis; L-valine biosynthesis; L-valine from pyruvate: step 3/4. Its function is as follows. Functions in the biosynthesis of branched-chain amino acids. Catalyzes the dehydration of (2R,3R)-2,3-dihydroxy-3-methylpentanoate (2,3-dihydroxy-3-methylvalerate) into 2-oxo-3-methylpentanoate (2-oxo-3-methylvalerate) and of (2R)-2,3-dihydroxy-3-methylbutanoate (2,3-dihydroxyisovalerate) into 2-oxo-3-methylbutanoate (2-oxoisovalerate), the penultimate precursor to L-isoleucine and L-valine, respectively. This chain is Dihydroxy-acid dehydratase, found in Caldicellulosiruptor saccharolyticus (strain ATCC 43494 / DSM 8903 / Tp8T 6331).